The primary structure comprises 479 residues: Aspartyl/glutamyl-tRNA(Asn/Gln) amidotransferase subunit B (479 aa).

Belongs to the GatB/GatE family. GatB subfamily. In terms of assembly, heterotrimer of A, B and C subunits.

It carries out the reaction L-glutamyl-tRNA(Gln) + L-glutamine + ATP + H2O = L-glutaminyl-tRNA(Gln) + L-glutamate + ADP + phosphate + H(+). It catalyses the reaction L-aspartyl-tRNA(Asn) + L-glutamine + ATP + H2O = L-asparaginyl-tRNA(Asn) + L-glutamate + ADP + phosphate + 2 H(+). Functionally, allows the formation of correctly charged Asn-tRNA(Asn) or Gln-tRNA(Gln) through the transamidation of misacylated Asp-tRNA(Asn) or Glu-tRNA(Gln) in organisms which lack either or both of asparaginyl-tRNA or glutaminyl-tRNA synthetases. The reaction takes place in the presence of glutamine and ATP through an activated phospho-Asp-tRNA(Asn) or phospho-Glu-tRNA(Gln). The chain is Aspartyl/glutamyl-tRNA(Asn/Gln) amidotransferase subunit B from Streptococcus pyogenes serotype M4 (strain MGAS10750).